Consider the following 465-residue polypeptide: Probable M18 family aminopeptidase 1 (465 aa).

Zn(2+) is bound by residues H105, H180, and H441.

The protein belongs to the peptidase M18 family. Zn(2+) is required as a cofactor.

This chain is Probable M18 family aminopeptidase 1 (apeA), found in Clostridium acetobutylicum (strain ATCC 824 / DSM 792 / JCM 1419 / IAM 19013 / LMG 5710 / NBRC 13948 / NRRL B-527 / VKM B-1787 / 2291 / W).